The chain runs to 638 residues: ATP-dependent zinc metalloprotease FtsH (638 aa).

Residues 1–4 are Cytoplasmic-facing; that stretch reads MNNQ. Residues 5-25 form a helical membrane-spanning segment; that stretch reads GKNIIVWAVIFVFVILLFNVF. Over 26 to 103 the chain is Periplasmic; that stretch reads QSDGLLSSKN…VVPPETRMNT (78 aa). The helical transmembrane segment at 104 to 124 threads the bilayer; sequence FLSFLISWFPMLLLIGVWVFF. The Cytoplasmic segment spans residues 125–638; it reads MRQMHGGGKA…PIKAKKEDKS (514 aa). 195 to 202 provides a ligand contact to ATP; the sequence is GPPGTGKT. H417 provides a ligand contact to Zn(2+). Residue E418 is part of the active site. Zn(2+) is bound by residues H421 and D495. Residues 523–544 are disordered; that stretch reads SASEDMYTNRNSSSDRSESTSE.

It in the central section; belongs to the AAA ATPase family. In the C-terminal section; belongs to the peptidase M41 family. Homohexamer. Zn(2+) is required as a cofactor.

It is found in the cell inner membrane. Acts as a processive, ATP-dependent zinc metallopeptidase for both cytoplasmic and membrane proteins. Plays a role in the quality control of integral membrane proteins. This is ATP-dependent zinc metalloprotease FtsH from Rickettsia bellii (strain RML369-C).